A 197-amino-acid chain; its full sequence is 3-isopropylmalate dehydratase small subunit (197 aa).

It belongs to the LeuD family. LeuD type 1 subfamily. In terms of assembly, heterodimer of LeuC and LeuD.

The catalysed reaction is (2R,3S)-3-isopropylmalate = (2S)-2-isopropylmalate. It functions in the pathway amino-acid biosynthesis; L-leucine biosynthesis; L-leucine from 3-methyl-2-oxobutanoate: step 2/4. In terms of biological role, catalyzes the isomerization between 2-isopropylmalate and 3-isopropylmalate, via the formation of 2-isopropylmaleate. This chain is 3-isopropylmalate dehydratase small subunit, found in Corynebacterium glutamicum (strain ATCC 13032 / DSM 20300 / JCM 1318 / BCRC 11384 / CCUG 27702 / LMG 3730 / NBRC 12168 / NCIMB 10025 / NRRL B-2784 / 534).